Here is a 323-residue protein sequence, read N- to C-terminus: Cuticle collagen 39 (323 aa).

A signal peptide spans 1 to 28 (MTGPTCLAVVAGISGVFVFGALFSVAQI). Positions 80–89 (QCNCGPQASN) are enriched in polar residues. Residues 80–293 (QCNCGPQASN…GAAEQGYRHR (214 aa)) are disordered. 3 triple-helical region regions span residues 93-125 (GPPGPPGAPGDRGLDGQPGGAGNPGQPGVAGPK), 138-200 (GSPG…GGQR), and 203-265 (GLPG…PGAD). Over residues 108 to 117 (GQPGGAGNPG) the composition is skewed to gly residues. Over residues 136 to 146 (PAGSPGPAGAP) the composition is skewed to low complexity. Residues 159–168 (GHPGQGGSQG) show a composition bias toward gly residues. Residues 169–191 (PAGPRGPAGDAGAPGQVGAPGNP) are compositionally biased toward low complexity. Residues 224 to 233 (GQSGGQGQQG) show a composition bias toward gly residues. The segment covering 234-267 (PAGPAGPDGQPGQPGQDGQAGAPGNDGAPGADAA) has biased composition (low complexity).

This sequence belongs to the cuticular collagen family. In terms of assembly, collagen polypeptide chains are complexed within the cuticle by disulfide bonds and other types of covalent cross-links.

In terms of biological role, nematode cuticles are composed largely of collagen-like proteins. The cuticle functions both as an exoskeleton and as a barrier to protect the worm from its environment. This Caenorhabditis elegans protein is Cuticle collagen 39 (col-39).